Consider the following 369-residue polypeptide: tRNA/tmRNA (uracil-C(5))-methyltransferase (369 aa).

Residues Gln190, Tyr218, Asn223, Glu239, and Asp301 each coordinate S-adenosyl-L-methionine. Cys326 (nucleophile) is an active-site residue. Catalysis depends on Glu360, which acts as the Proton acceptor.

Belongs to the class I-like SAM-binding methyltransferase superfamily. RNA M5U methyltransferase family. TrmA subfamily.

The catalysed reaction is uridine(54) in tRNA + S-adenosyl-L-methionine = 5-methyluridine(54) in tRNA + S-adenosyl-L-homocysteine + H(+). It catalyses the reaction uridine(341) in tmRNA + S-adenosyl-L-methionine = 5-methyluridine(341) in tmRNA + S-adenosyl-L-homocysteine + H(+). Functionally, dual-specificity methyltransferase that catalyzes the formation of 5-methyluridine at position 54 (m5U54) in all tRNAs, and that of position 341 (m5U341) in tmRNA (transfer-mRNA). This is tRNA/tmRNA (uracil-C(5))-methyltransferase from Vibrio cholerae serotype O1 (strain ATCC 39541 / Classical Ogawa 395 / O395).